Consider the following 418-residue polypeptide: Thyroxine-binding globulin (418 aa).

The N-terminal stretch at Met1–Cys20 is a signal peptide. N-linked (GlcNAc...) asparagine glycans are attached at residues Asn24, Asn39, Asn102, Asn168, Asn227, and Asn256. Thyroxine-binding residues include Asn296 and Lys401.

It belongs to the serpin family. Expressed by the liver and secreted in plasma.

It localises to the secreted. Major thyroid hormone transport protein in serum. The chain is Thyroxine-binding globulin (Serpina7) from Rattus norvegicus (Rat).